A 378-amino-acid chain; its full sequence is Erythronate-4-phosphate dehydrogenase (378 aa).

Substrate is bound by residues Ser-45 and Thr-66. The NAD(+) site is built by Asp-146 and Thr-175. The active site involves Arg-208. Asp-232 is a binding site for NAD(+). Glu-237 is an active-site residue. His-254 functions as the Proton donor in the catalytic mechanism. Residue Gly-257 participates in NAD(+) binding. A substrate-binding site is contributed by Tyr-258.

This sequence belongs to the D-isomer specific 2-hydroxyacid dehydrogenase family. PdxB subfamily. In terms of assembly, homodimer.

It is found in the cytoplasm. The enzyme catalyses 4-phospho-D-erythronate + NAD(+) = (R)-3-hydroxy-2-oxo-4-phosphooxybutanoate + NADH + H(+). It participates in cofactor biosynthesis; pyridoxine 5'-phosphate biosynthesis; pyridoxine 5'-phosphate from D-erythrose 4-phosphate: step 2/5. In terms of biological role, catalyzes the oxidation of erythronate-4-phosphate to 3-hydroxy-2-oxo-4-phosphonooxybutanoate. This chain is Erythronate-4-phosphate dehydrogenase, found in Escherichia coli O81 (strain ED1a).